The sequence spans 209 residues: Dephospho-CoA kinase (209 aa).

The 197-residue stretch at 13 to 209 (RIGLTGGIAT…AIEKVVVAEN (197 aa)) folds into the DPCK domain. ATP is bound at residue 21–26 (ATGKST).

It belongs to the CoaE family.

It is found in the cytoplasm. It catalyses the reaction 3'-dephospho-CoA + ATP = ADP + CoA + H(+). Its pathway is cofactor biosynthesis; coenzyme A biosynthesis; CoA from (R)-pantothenate: step 5/5. Functionally, catalyzes the phosphorylation of the 3'-hydroxyl group of dephosphocoenzyme A to form coenzyme A. The chain is Dephospho-CoA kinase from Synechococcus elongatus (strain ATCC 33912 / PCC 7942 / FACHB-805) (Anacystis nidulans R2).